Consider the following 151-residue polypeptide: Small ribosomal subunit protein uS15 (151 aa).

Ser21 and Ser32 each carry phosphoserine.

The protein belongs to the universal ribosomal protein uS15 family. As to quaternary structure, component of the small ribosomal subunit (SSU). Mature yeast ribosomes consist of a small (40S) and a large (60S) subunit. The 40S small subunit contains 1 molecule of ribosomal RNA (18S rRNA) and at least 33 different proteins. The large 60S subunit contains 3 rRNA molecules (25S, 5.8S and 5S rRNA) and at least 46 different proteins.

The protein localises to the cytoplasm. Its function is as follows. Component of the ribosome, a large ribonucleoprotein complex responsible for the synthesis of proteins in the cell. The small ribosomal subunit (SSU) binds messenger RNAs (mRNAs) and translates the encoded message by selecting cognate aminoacyl-transfer RNA (tRNA) molecules. The large subunit (LSU) contains the ribosomal catalytic site termed the peptidyl transferase center (PTC), which catalyzes the formation of peptide bonds, thereby polymerizing the amino acids delivered by tRNAs into a polypeptide chain. The nascent polypeptides leave the ribosome through a tunnel in the LSU and interact with protein factors that function in enzymatic processing, targeting, and the membrane insertion of nascent chains at the exit of the ribosomal tunnel. This is Small ribosomal subunit protein uS15 (rps13) from Schizosaccharomyces pombe (strain 972 / ATCC 24843) (Fission yeast).